The sequence spans 323 residues: Alpha-tubulin N-acetyltransferase 1 (323 aa).

Residues M1–F190 enclose the N-acetyltransferase domain. The residue at position 56 (K56) is an N6-acetyllysine; by autocatalysis. F124 to R137 provides a ligand contact to acetyl-CoA. K146 is modified (N6-acetyllysine; by autocatalysis). S160 to K169 contributes to the acetyl-CoA binding site. The segment at P196–D239 is disordered. The span at A209–A220 shows a compositional bias: low complexity. Over residues K226–D239 the composition is skewed to basic and acidic residues. N6-acetyllysine; by autocatalysis is present on residues K233 and K244. A disordered region spans residues P252 to P287. Phosphoserine is present on residues S272 and S276. Asymmetric dimethylarginine is present on R305. A Phosphoserine modification is found at S315. R323 bears the Omega-N-methylarginine mark.

Belongs to the acetyltransferase ATAT1 family. Component of the BBSome complex. Interacts with AP2 alpha-adaptins, including AP2A2, but not with AP1 gamma-adaptin (AP1G1/AP1G2); this interaction is required for efficient alpha-tubulin acetylation, hence clathrin-coated pits are sites of microtubule acetylation. Autoacetylation strongly increases tubulin acetylation.

The protein localises to the cytoplasm. It localises to the membrane. It is found in the clathrin-coated pit. The protein resides in the cell junction. Its subcellular location is the focal adhesion. The protein localises to the cell projection. It localises to the axon. It is found in the cytoskeleton. The protein resides in the spindle. The enzyme catalyses L-lysyl-[alpha-tubulin] + acetyl-CoA = N(6)-acetyl-L-lysyl-[alpha-tubulin] + CoA + H(+). Functionally, specifically acetylates 'Lys-40' in alpha-tubulin on the lumenal side of microtubules. Promotes microtubule destabilization and accelerates microtubule dynamics; this activity may be independent of acetylation activity. Acetylates alpha-tubulin with a slow enzymatic rate, due to a catalytic site that is not optimized for acetyl transfer. Enters the microtubule through each end and diffuses quickly throughout the lumen of microtubules. Acetylates only long/old microtubules because of its slow acetylation rate since it does not have time to act on dynamically unstable microtubules before the enzyme is released. Required for normal sperm flagellar function. Promotes directional cell locomotion and chemotaxis, through AP2A2-dependent acetylation of alpha-tubulin at clathrin-coated pits that are concentrated at the leading edge of migrating cells. May facilitate primary cilium assembly. This chain is Alpha-tubulin N-acetyltransferase 1, found in Macaca mulatta (Rhesus macaque).